The primary structure comprises 53 residues: Gene 87 protein (53 aa).

This Mycobacterium phage L5 (Mycobacteriophage L5) protein is Gene 87 protein (87).